Reading from the N-terminus, the 503-residue chain is Putative aldehyde dehydrogenase-like protein C9E9.09c (503 aa).

247-252 is a binding site for NAD(+); the sequence is GSTGVG. Ser248 is modified (phosphoserine). Catalysis depends on Glu270, which acts as the Proton acceptor. The active-site Nucleophile is Cys304. Ser501 is modified (phosphoserine).

It belongs to the aldehyde dehydrogenase family.

The polypeptide is Putative aldehyde dehydrogenase-like protein C9E9.09c (Schizosaccharomyces pombe (strain 972 / ATCC 24843) (Fission yeast)).